The chain runs to 487 residues: 3-octaprenyl-4-hydroxybenzoate carboxy-lyase (487 aa).

Mn(2+) is bound at residue asparagine 172. Residues 175–177, 189–191, and 194–195 each bind prenylated FMN; these read IYR, RWL, and RG. Residue glutamate 238 participates in Mn(2+) binding. The active-site Proton donor is aspartate 287.

It belongs to the UbiD family. Homohexamer. It depends on prenylated FMN as a cofactor. The cofactor is Mn(2+).

It is found in the cell membrane. The catalysed reaction is a 4-hydroxy-3-(all-trans-polyprenyl)benzoate + H(+) = a 2-(all-trans-polyprenyl)phenol + CO2. It participates in cofactor biosynthesis; ubiquinone biosynthesis. In terms of biological role, catalyzes the decarboxylation of 3-octaprenyl-4-hydroxy benzoate to 2-octaprenylphenol, an intermediate step in ubiquinone biosynthesis. This is 3-octaprenyl-4-hydroxybenzoate carboxy-lyase from Nitrosomonas europaea (strain ATCC 19718 / CIP 103999 / KCTC 2705 / NBRC 14298).